We begin with the raw amino-acid sequence, 739 residues long: Prestin (739 aa).

The Cytoplasmic segment spans residues 1–76 (MEHVTVSEEP…PILTWLPSYP (76 aa)). Residues 77–106 (LKEYLFGDIVSGISTGVMQLPQGLAYAMLA) form a helical membrane-spanning segment. Residues 107 to 109 (AVP) are Extracellular-facing. The helical transmembrane segment at 110–127 (PVFGLYSSFYPVLLYTFF) threads the bilayer. Residues 128–138 (GTSKHISIGTF) lie on the Cytoplasmic side of the membrane. Residues 139–152 (AVISLMIGGVAVRE) form a helical membrane-spanning segment. At 153 to 169 (APDSMFMVNGTNSSLVV) the chain is on the extracellular side. Residues asparagine 161 and asparagine 164 are each glycosylated (N-linked (GlcNAc...) asparagine). A helical transmembrane segment spans residues 170–199 (NIEARDSRRVEVVVALTTLVGIIQFVLGLL). Residues 200–209 (RFGFLAIYLT) lie on the Cytoplasmic side of the membrane. The helical transmembrane segment at 210 to 233 (EPLVRGFTTAAAVHVSVSQLKYLL) threads the bilayer. Residues 234 to 244 (GVKTARFNGPL) lie on the Extracellular side of the membrane. An intramembrane region (helical) is located at residues 245-256 (SVVYSLDAVLRN). At 257-261 (IADTN) the chain is on the extracellular side. A helical membrane pass occupies residues 262–285 (IVTLIIGLGCTVFLYIIKQLNERF). Topologically, residues 286–294 (KKKLLIPIP) are cytoplasmic. The helical transmembrane segment at 295-310 (GEIIVVIVSTGISYGM) threads the bilayer. Topologically, residues 311–335 (LMSENYGVDVVGKIPTGLLPPKVPD) are extracellular. The chain crosses the membrane as a helical span at residues 336–370 (FSVFPNLFADAVPIAVVGFSITISLAKTFALKYGY). At 371 to 373 (SVD) the chain is on the cytoplasmic side. Residues 374-391 (GNQELIALGLCNFVSSFF) traverse the membrane as a helical segment. Topologically, residues 392–399 (HTFVVTAS) are extracellular. The helical transmembrane segment at 400 to 409 (MSRSLVQEST) threads the bilayer. Serine 401 lines the salicylate pocket. At 410-413 (GGHT) the chain is on the cytoplasmic side. A helical membrane pass occupies residues 414-435 (EIAGLLASLLVLLVVVAIGFVF). At 436–439 (QPLP) the chain is on the extracellular side. Residues 440-467 (TTVLAAIIMVNLLGMFKQTRDIPVLWRK) traverse the membrane as a helical segment. Serine 468 is a topological domain (cytoplasmic). The helical transmembrane segment at 469–484 (KIELAIWLVSFFASVL) threads the bilayer. Residues 485 to 486 (LG) lie on the Extracellular side of the membrane. A helical transmembrane segment spans residues 487-507 (LDYGLAVAMAFAILTVIYRTQ). An extended region for STAS domain region spans residues 508–731 (RPKNVVLGQI…AVLQCKRWRD (224 aa)). At 508 to 739 (RPKNVVLGQI…RDLPVHPNIH (232 aa)) the chain is on the cytoplasmic side. Positions 528 to 726 (EYEEAEECSG…PTIHDAVLQC (199 aa)) constitute an STAS domain.

This sequence belongs to the SLC26A/SulP transporter (TC 2.A.53) family. Homodimer. Interacts (via STAS domain) with CALM; this interaction is calcium-dependent. As to expression, expressed in hair cells of the auditory organs.

It is found in the cell membrane. It carries out the reaction oxalate(in) + chloride(out) = oxalate(out) + chloride(in). The enzyme catalyses sulfate(out) + chloride(in) = sulfate(in) + chloride(out). Sulfate/chloride antiport activity is inhibited by salicylate; this inhibition is reversible. Functionally, electrogenic antiporter that exchanges sulfate or oxalate for chloride ion in a strictly coupled manner with a 1:1 stoichiometry. Adopts a dynamic conformation, which alternates between the exposure of the central binding site to the extra- and intracellular solutions leading to an inward-to-outward conformational transition during the transport cycle. Generates voltage-dependent charge movements resembling to the non-linear capacitance (NLC) of the cell membrane, but which are not associated to electromotile activity. The sequence is that of Prestin from Danio rerio (Zebrafish).